A 167-amino-acid chain; its full sequence is Phosphopantetheine adenylyltransferase (167 aa).

Position 10 (Ser-10) interacts with substrate. ATP-binding positions include 10–11 (SF) and His-18. Substrate is bound by residues Lys-42, Ala-79, and Arg-93. Residues 94 to 96 (GLR), Glu-104, and 129 to 135 (VRHITAT) each bind ATP.

The protein belongs to the bacterial CoaD family. Homohexamer. Mg(2+) serves as cofactor.

It is found in the cytoplasm. The enzyme catalyses (R)-4'-phosphopantetheine + ATP + H(+) = 3'-dephospho-CoA + diphosphate. It functions in the pathway cofactor biosynthesis; coenzyme A biosynthesis; CoA from (R)-pantothenate: step 4/5. In terms of biological role, reversibly transfers an adenylyl group from ATP to 4'-phosphopantetheine, yielding dephospho-CoA (dPCoA) and pyrophosphate. The polypeptide is Phosphopantetheine adenylyltransferase (Beijerinckia indica subsp. indica (strain ATCC 9039 / DSM 1715 / NCIMB 8712)).